Reading from the N-terminus, the 328-residue chain is L-lactate dehydrogenase (328 aa).

Residues V18, E39, K46, Y71, and 85–86 each bind NAD(+); that span reads GA. The substrate site is built by Q88 and R94. Residues S107, 124 to 126, and S149 contribute to the NAD(+) site; that span reads AAN. 126-129 provides a ligand contact to substrate; that stretch reads NPVD. 154-157 is a binding site for substrate; it reads DSAR. Residues R159 and H174 each contribute to the beta-D-fructose 1,6-bisphosphate site. H181 (proton acceptor) is an active-site residue. Y226 carries the post-translational modification Phosphotyrosine. T235 is a binding site for substrate.

It belongs to the LDH/MDH superfamily. LDH family. Homotetramer.

It localises to the cytoplasm. It catalyses the reaction (S)-lactate + NAD(+) = pyruvate + NADH + H(+). Its pathway is fermentation; pyruvate fermentation to lactate; (S)-lactate from pyruvate: step 1/1. Its activity is regulated as follows. Allosterically activated by fructose 1,6-bisphosphate (FBP). In terms of biological role, catalyzes the conversion of lactate to pyruvate. The polypeptide is L-lactate dehydrogenase (Streptococcus pneumoniae (strain 70585)).